The primary structure comprises 234 residues: Phosphoglycolate phosphatase (234 aa).

The active-site Nucleophile is the Asp8. Mg(2+)-binding residues include Asp8 and Asp10. Residue Lys155 coordinates substrate. Mg(2+) contacts are provided by Asp178 and Asp182.

Belongs to the archaeal SPP-like hydrolase family. It depends on Mg(2+) as a cofactor.

It carries out the reaction 2-phosphoglycolate + H2O = glycolate + phosphate. Its function is as follows. Catalyzes the dephosphorylation of 2-phosphoglycolate. The sequence is that of Phosphoglycolate phosphatase from Thermococcus sibiricus (strain DSM 12597 / MM 739).